A 226-amino-acid polypeptide reads, in one-letter code: Hand transcription factor 1 (226 aa).

Over residues 1–15 the composition is skewed to polar residues; that stretch reads MVKSTTAGNNAVSSL. Residues 1–35 form a disordered region; the sequence is MVKSTTAGNNAVSSLESTDSKKSRKEKSREKEHRR. Residues 23–36 are basic motif; it reads SRKEKSREKEHRRA. Residues 23 to 77 form the bHLH domain; that stretch reads SRKEKSREKEHRRAQCINSAFEILQQHIPYLKSEERKSLPKIKTLRLAMQYIDHL. The segment at 37–77 is helix-loop-helix motif; the sequence is QCINSAFEILQQHIPYLKSEERKSLPKIKTLRLAMQYIDHL.

It localises to the nucleus. Functionally, probable transcription factor which regulates early embryonic myogenesis, in cooperation with transcription factors unc-120 and hlh-1. Involved in controlling the number and position of somatic gonadal precursor cells (SGPs) in the gonadal primordium, and embryonic body shape. The polypeptide is Hand transcription factor 1 (Caenorhabditis elegans).